A 1512-amino-acid chain; its full sequence is Probable RNA-directed RNA polymerase (1512 aa).

It belongs to the totiviridae RNA-directed RNA polymerase family.

The catalysed reaction is RNA(n) + a ribonucleoside 5'-triphosphate = RNA(n+1) + diphosphate. Its function is as follows. RNA-dependent RNA polymerase which replicates the viral genome. Catalyzes the transcription of fully conservative plus-strand genomic RNAs that are extruded from the virion into the cytoplasm where they function as mRNAs for translation of viral proteins and also as substrates for encapsidation to form new virions. Once encapsidated, the positive strand is converted to dsRNA by the RNA-directed RNA polymerase. This is Probable RNA-directed RNA polymerase (gag-pol) from Saccharomyces cerevisiae virus L-BC (ScV-L-BC).